The sequence spans 268 residues: AB hydrolase superfamily protein YisY (268 aa).

An AB hydrolase-1 domain is found at Pro23–Glu254. Residues Ser96, Asp220, and His248 contribute to the active site.

It belongs to the AB hydrolase superfamily.

The polypeptide is AB hydrolase superfamily protein YisY (yisY) (Bacillus subtilis (strain 168)).